A 193-amino-acid chain; its full sequence is dTTP/UTP pyrophosphatase (193 aa).

Residue aspartate 77 is the Proton acceptor of the active site.

It belongs to the Maf family. YhdE subfamily. It depends on a divalent metal cation as a cofactor.

The protein localises to the cytoplasm. The catalysed reaction is dTTP + H2O = dTMP + diphosphate + H(+). It carries out the reaction UTP + H2O = UMP + diphosphate + H(+). In terms of biological role, nucleoside triphosphate pyrophosphatase that hydrolyzes dTTP and UTP. May have a dual role in cell division arrest and in preventing the incorporation of modified nucleotides into cellular nucleic acids. In Parabacteroides distasonis (strain ATCC 8503 / DSM 20701 / CIP 104284 / JCM 5825 / NCTC 11152), this protein is dTTP/UTP pyrophosphatase.